We begin with the raw amino-acid sequence, 74 residues long: Translation initiation factor IF-1 (74 aa).

Residues 1-72 (MSKEDAIEME…NKGRITYRLK (72 aa)) enclose the S1-like domain.

It belongs to the IF-1 family. In terms of assembly, component of the 30S ribosomal translation pre-initiation complex which assembles on the 30S ribosome in the order IF-2 and IF-3, IF-1 and N-formylmethionyl-tRNA(fMet); mRNA recruitment can occur at any time during PIC assembly.

It is found in the cytoplasm. Its function is as follows. One of the essential components for the initiation of protein synthesis. Stabilizes the binding of IF-2 and IF-3 on the 30S subunit to which N-formylmethionyl-tRNA(fMet) subsequently binds. Helps modulate mRNA selection, yielding the 30S pre-initiation complex (PIC). Upon addition of the 50S ribosomal subunit IF-1, IF-2 and IF-3 are released leaving the mature 70S translation initiation complex. This Synechococcus sp. (strain JA-2-3B'a(2-13)) (Cyanobacteria bacterium Yellowstone B-Prime) protein is Translation initiation factor IF-1.